The chain runs to 185 residues: ATP synthase subunit delta (185 aa).

Belongs to the ATPase delta chain family. As to quaternary structure, F-type ATPases have 2 components, F(1) - the catalytic core - and F(0) - the membrane proton channel. F(1) has five subunits: alpha(3), beta(3), gamma(1), delta(1), epsilon(1). F(0) has three main subunits: a(1), b(2) and c(10-14). The alpha and beta chains form an alternating ring which encloses part of the gamma chain. F(1) is attached to F(0) by a central stalk formed by the gamma and epsilon chains, while a peripheral stalk is formed by the delta and b chains.

The protein localises to the cell inner membrane. In terms of biological role, f(1)F(0) ATP synthase produces ATP from ADP in the presence of a proton or sodium gradient. F-type ATPases consist of two structural domains, F(1) containing the extramembraneous catalytic core and F(0) containing the membrane proton channel, linked together by a central stalk and a peripheral stalk. During catalysis, ATP synthesis in the catalytic domain of F(1) is coupled via a rotary mechanism of the central stalk subunits to proton translocation. This protein is part of the stalk that links CF(0) to CF(1). It either transmits conformational changes from CF(0) to CF(1) or is implicated in proton conduction. The protein is ATP synthase subunit delta of Pelagibacter ubique (strain HTCC1062).